The following is a 160-amino-acid chain: 2-C-methyl-D-erythritol 2,4-cyclodiphosphate synthase (160 aa).

A divalent metal cation contacts are provided by Asp-11 and His-13. 4-CDP-2-C-methyl-D-erythritol 2-phosphate contacts are provided by residues 11–13 (DVH) and 37–38 (HS). His-45 contacts a divalent metal cation. 4-CDP-2-C-methyl-D-erythritol 2-phosphate is bound by residues 59–61 (DIG) and Arg-145.

The protein belongs to the IspF family. Homotrimer. A divalent metal cation is required as a cofactor.

It carries out the reaction 4-CDP-2-C-methyl-D-erythritol 2-phosphate = 2-C-methyl-D-erythritol 2,4-cyclic diphosphate + CMP. Its pathway is isoprenoid biosynthesis; isopentenyl diphosphate biosynthesis via DXP pathway; isopentenyl diphosphate from 1-deoxy-D-xylulose 5-phosphate: step 4/6. Functionally, involved in the biosynthesis of isopentenyl diphosphate (IPP) and dimethylallyl diphosphate (DMAPP), two major building blocks of isoprenoid compounds. Catalyzes the conversion of 4-diphosphocytidyl-2-C-methyl-D-erythritol 2-phosphate (CDP-ME2P) to 2-C-methyl-D-erythritol 2,4-cyclodiphosphate (ME-CPP) with a corresponding release of cytidine 5-monophosphate (CMP). This chain is 2-C-methyl-D-erythritol 2,4-cyclodiphosphate synthase, found in Neisseria meningitidis serogroup A / serotype 4A (strain DSM 15465 / Z2491).